We begin with the raw amino-acid sequence, 480 residues long: UDP-glucose 6-dehydrogenase 4 (480 aa).

Residues 3–20 (KICCIGAGYVGGPTMAVI), aspartate 33, arginine 38, threonine 90, threonine 128, and glutamate 161 each bind NAD(+). Substrate is bound by residues 157-161 (EFLAE), lysine 216, 216-223 (KLAANAFL), 256-269 (RIGSKFLNASVGFG), and glycine 269. The active-site Nucleophile is cysteine 272. NAD(+) is bound at residue lysine 275. Positions 334 and 335 each coordinate substrate. An NAD(+)-binding site is contributed by arginine 342. Arginine 447 contacts substrate.

Belongs to the UDP-glucose/GDP-mannose dehydrogenase family.

The enzyme catalyses UDP-alpha-D-glucose + 2 NAD(+) + H2O = UDP-alpha-D-glucuronate + 2 NADH + 3 H(+). It functions in the pathway nucleotide-sugar biosynthesis; UDP-alpha-D-glucuronate biosynthesis; UDP-alpha-D-glucuronate from UDP-alpha-D-glucose: step 1/1. Its activity is regulated as follows. Inhibited by UDP-xylose. Functionally, involved in the biosynthesis of UDP-glucuronic acid (UDP-GlcA), providing nucleotide sugars for cell-wall polymers. The protein is UDP-glucose 6-dehydrogenase 4 of Arabidopsis thaliana (Mouse-ear cress).